The sequence spans 406 residues: Homocysteine-responsive endoplasmic reticulum-resident ubiquitin-like domain member 2 protein (406 aa).

Residues 10 to 89 (VTLIIKAPNQ…HMVHLVCTSR (80 aa)) form the Ubiquitin-like domain. The interval 86 to 154 (CTSRTPPSSP…TLPQAQTDQA (69 aa)) is disordered. 2 stretches are compositionally biased toward low complexity: residues 87 to 98 (TSRTPPSSPKSS) and 106 to 126 (ALAS…PSSG). The segment covering 127-154 (QETLSLAVGSSSEGLRQRTLPQAQTDQA) has biased composition (polar residues). A helical membrane pass occupies residues 302–322 (FIMVMGAMLLVYLHQAGWFPF).

It is found in the membrane. Functionally, could be involved in the unfolded protein response (UPR) pathway. The chain is Homocysteine-responsive endoplasmic reticulum-resident ubiquitin-like domain member 2 protein (HERPUD2) from Homo sapiens (Human).